We begin with the raw amino-acid sequence, 460 residues long: C4-dicarboxylate transport protein (460 aa).

Transmembrane regions (helical) follow at residues 20–40 (SLYF…HFYP), 56–76 (LIKM…IAGM), 88–108 (YALL…LIVV), 153–173 (IVGA…VIFG), 200–220 (IINM…AFTI), 234–254 (LMIC…GAIC), 301–321 (VVGL…SIYL), 342–362 (ITLL…TGSG), and 364–384 (IVLA…LALI). A disordered region spans residues 438–460 (PEDDLGVAEGPTPANAVNTTKTV).

This sequence belongs to the dicarboxylate/amino acid:cation symporter (DAACS) (TC 2.A.23) family.

Its subcellular location is the cell inner membrane. Functionally, responsible for the transport of dicarboxylates such as succinate, fumarate, and malate from the periplasm across the membrane. The sequence is that of C4-dicarboxylate transport protein from Pseudomonas savastanoi pv. phaseolicola (strain 1448A / Race 6) (Pseudomonas syringae pv. phaseolicola (strain 1448A / Race 6)).